A 361-amino-acid chain; its full sequence is Phosphoserine aminotransferase (361 aa).

Arginine 42 serves as a coordination point for L-glutamate. Residues alanine 76 to arginine 77, tryptophan 102, threonine 153, aspartate 173, and glutamine 196 each bind pyridoxal 5'-phosphate. Lysine 197 is modified (N6-(pyridoxal phosphate)lysine). A pyridoxal 5'-phosphate-binding site is contributed by asparagine 238 to threonine 239.

The protein belongs to the class-V pyridoxal-phosphate-dependent aminotransferase family. SerC subfamily. As to quaternary structure, homodimer. It depends on pyridoxal 5'-phosphate as a cofactor.

It is found in the cytoplasm. The enzyme catalyses O-phospho-L-serine + 2-oxoglutarate = 3-phosphooxypyruvate + L-glutamate. It catalyses the reaction 4-(phosphooxy)-L-threonine + 2-oxoglutarate = (R)-3-hydroxy-2-oxo-4-phosphooxybutanoate + L-glutamate. It functions in the pathway amino-acid biosynthesis; L-serine biosynthesis; L-serine from 3-phospho-D-glycerate: step 2/3. It participates in cofactor biosynthesis; pyridoxine 5'-phosphate biosynthesis; pyridoxine 5'-phosphate from D-erythrose 4-phosphate: step 3/5. In terms of biological role, catalyzes the reversible conversion of 3-phosphohydroxypyruvate to phosphoserine and of 3-hydroxy-2-oxo-4-phosphonooxybutanoate to phosphohydroxythreonine. The polypeptide is Phosphoserine aminotransferase (Yersinia enterocolitica serotype O:8 / biotype 1B (strain NCTC 13174 / 8081)).